Here is a 132-residue protein sequence, read N- to C-terminus: Heat shock protein 15 homolog (132 aa).

Positions 11-73 (VRLDKWLWAA…DEREVRVLQV (63 aa)) constitute an S4 RNA-binding domain. 2 stretches are compositionally biased toward basic and acidic residues: residues 94–105 (LKKRAENSEARR) and 114–125 (PERRPDKQERRQ). A disordered region spans residues 94–132 (LKKRAENSEARRFNSQFAPSPERRPDKQERRQLIKVKQY).

It belongs to the HSP15 family.

Its function is as follows. May play an important role in binding of nucleic acid. More specific for RNA. The sequence is that of Heat shock protein 15 homolog (hslR) from Aeromonas salmonicida.